The primary structure comprises 332 residues: Malate dehydrogenase 1, cytoplasmic (332 aa).

NAD(+) is bound by residues 16–17 (QI) and D43. M56 bears the Methionine sulfoxide mark. G90 is an NAD(+) binding site. M97 carries the post-translational modification Methionine sulfoxide. R99 contacts oxaloacetate. NAD(+) is bound at residue Q113. K119 is covalently cross-linked (Glycyl lysine isopeptide (Lys-Gly) (interchain with G-Cter in ubiquitin)). N132 contacts NAD(+). Residues N132, R163, H188, and S243 each contribute to the oxaloacetate site. The Proton acceptor role is filled by H188.

The protein belongs to the LDH/MDH superfamily. MDH type 2 family. Forms a homodimer. Forms a disulfide-linked homodimer upon oxidation. Interacts with 14-3-3-like proteins GRF1 GRF3 and GRF8. Interacts with TRX1, TRX2, TRX3, TRX4 and TRX5. As to expression, expressed in rosette leaves.

The protein localises to the cytoplasm. It catalyses the reaction (S)-malate + NAD(+) = oxaloacetate + NADH + H(+). Its activity is regulated as follows. Decreased activity upon treatment with hydrogen peroxide. In terms of biological role, catalyzes a reversible NAD-dependent dehydrogenase reaction involved in central metabolism and redox homeostasis between organellar compartments. The sequence is that of Malate dehydrogenase 1, cytoplasmic (MDH1) from Arabidopsis thaliana (Mouse-ear cress).